A 259-amino-acid chain; its full sequence is Probable dihydroorotate dehydrogenase B (NAD(+)), electron transfer subunit (259 aa).

The FAD-binding FR-type domain maps to 1–89 (MLPLNATITQ…RGPFGKGFTL (89 aa)). Cys211, Cys216, Cys219, and Cys229 together coordinate [2Fe-2S] cluster.

Belongs to the PyrK family. As to quaternary structure, heterotetramer of 2 PyrK and 2 PyrD type B subunits. It depends on [2Fe-2S] cluster as a cofactor. The cofactor is FAD.

It participates in pyrimidine metabolism; UMP biosynthesis via de novo pathway; orotate from (S)-dihydroorotate (NAD(+) route): step 1/1. In terms of biological role, responsible for channeling the electrons from the oxidation of dihydroorotate from the FMN redox center in the PyrD type B subunit to the ultimate electron acceptor NAD(+). The chain is Probable dihydroorotate dehydrogenase B (NAD(+)), electron transfer subunit from Methanosarcina mazei (strain ATCC BAA-159 / DSM 3647 / Goe1 / Go1 / JCM 11833 / OCM 88) (Methanosarcina frisia).